The following is a 261-amino-acid chain: Carbonic anhydrase 1 (261 aa).

Ala2 carries the N-acetylalanine modification. The Alpha-carbonic anhydrase domain maps to 4–261 (ADWGYGSENG…LKGRTVRASF (258 aa)). His65 serves as the catalytic Proton donor/acceptor. Residues His95, His97, and His120 each contribute to the Zn(2+) site. Residues Thr200 and 200–201 (TH) each bind substrate. A disordered region spans residues 239 to 261 (AVPVLSNHRPPQPLKGRTVRASF).

The protein belongs to the alpha-carbonic anhydrase family. Zn(2+) serves as cofactor.

The protein resides in the cytoplasm. It carries out the reaction hydrogencarbonate + H(+) = CO2 + H2O. The enzyme catalyses urea = cyanamide + H2O. Inhibited by acetazolamide. Functionally, catalyzes the reversible hydration of carbon dioxide. Can hydrate cyanamide to urea. In Mus musculus (Mouse), this protein is Carbonic anhydrase 1 (Ca1).